The primary structure comprises 242 residues: DNA repair protein RecO (242 aa).

It belongs to the RecO family. In terms of assembly, monomer.

Functionally, involved in DNA repair and RecF pathway recombination. This Salmonella dublin (strain CT_02021853) protein is DNA repair protein RecO.